We begin with the raw amino-acid sequence, 198 residues long: RNA-free ribonuclease P (198 aa).

The protein belongs to the HARP family.

The catalysed reaction is Endonucleolytic cleavage of RNA, removing 5'-extranucleotides from tRNA precursor.. RNA-free RNase P that catalyzes the removal of the 5'-leader sequence from pre-tRNA to produce the mature 5'-terminus. This Thermococcus kodakarensis (strain ATCC BAA-918 / JCM 12380 / KOD1) (Pyrococcus kodakaraensis (strain KOD1)) protein is RNA-free ribonuclease P.